Reading from the N-terminus, the 88-residue chain is YcgL domain-containing protein NTHI1684 (88 aa).

Residues 1-85 (MLCAIYKSKK…QDDGLFNSLS (85 aa)) enclose the YcgL domain.

The chain is YcgL domain-containing protein NTHI1684 from Haemophilus influenzae (strain 86-028NP).